Here is a 460-residue protein sequence, read N- to C-terminus: Probable serine/threonine-protein kinase kinase DDB_G0280557 (460 aa).

Residues I102–F416 enclose the Protein kinase domain. Residues K131 and Q154–L162 contribute to the ATP site. D250 acts as the Proton acceptor in catalysis.

The protein belongs to the protein kinase superfamily. CMGC Ser/Thr protein kinase family. MAP kinase subfamily.

The catalysed reaction is L-seryl-[protein] + ATP = O-phospho-L-seryl-[protein] + ADP + H(+). It catalyses the reaction L-threonyl-[protein] + ATP = O-phospho-L-threonyl-[protein] + ADP + H(+). In Dictyostelium discoideum (Social amoeba), this protein is Probable serine/threonine-protein kinase kinase DDB_G0280557.